The following is a 682-amino-acid chain: Potassium-transporting ATPase ATP-binding subunit (682 aa).

The next 4 membrane-spanning stretches (helical) occupy residues 34–54 (PVMFIVWIGSLLTTCISIAMA), 62–82 (ALFSAAISGWLWVTVLFANFA), 219–239 (IALTILLIALTIVFLLATATL), and 254–274 (VLVALLVCLIPTTIGGLLSAI). Asp-307 (4-aspartylphosphate intermediate) is an active-site residue. ATP-binding positions include Asp-344, Glu-348, 377-384 (FTAQSRMS), and Lys-395. Positions 518 and 522 each coordinate Mg(2+). The next 3 helical transmembrane spans lie at 588 to 608 (FAIIPAAFAATYPQLNALNIM), 616 to 636 (AILSAVIFNALIIVFLIPLAL), and 656 to 676 (IYGLGGLLVPFIGIKVIDLLL).

The protein belongs to the cation transport ATPase (P-type) (TC 3.A.3) family. Type IA subfamily. The system is composed of three essential subunits: KdpA, KdpB and KdpC.

The protein localises to the cell inner membrane. It carries out the reaction K(+)(out) + ATP + H2O = K(+)(in) + ADP + phosphate + H(+). Functionally, part of the high-affinity ATP-driven potassium transport (or Kdp) system, which catalyzes the hydrolysis of ATP coupled with the electrogenic transport of potassium into the cytoplasm. This subunit is responsible for energy coupling to the transport system and for the release of the potassium ions to the cytoplasm. This Shigella boydii serotype 18 (strain CDC 3083-94 / BS512) protein is Potassium-transporting ATPase ATP-binding subunit.